A 229-amino-acid chain; its full sequence is (S)-2-haloacid dehalogenase 2 (229 aa).

The active-site Nucleophile is aspartate 10. An (S)-2-haloacid contacts are provided by residues 11–12, arginine 41, and 118–119; these read LY and SN. The interval 175–180 is important for catalytic activity; that stretch reads SSNAWD.

It belongs to the HAD-like hydrolase superfamily. S-2-haloalkanoic acid dehalogenase family.

The catalysed reaction is an (S)-2-haloacid + H2O = a (2R)-2-hydroxycarboxylate + a halide anion + H(+). The enzyme catalyses (S)-2-chloropropanoate + H2O = (R)-lactate + chloride + H(+). In terms of biological role, catalyzes the hydrolytic dehalogenation of small (S)-2-haloalkanoic acids to yield the corresponding (R)-2-hydroxyalkanoic acids. Acts on acids of short chain lengths, C(2) to C(4), with inversion of configuration at C-2. Active with 2-halogenated carboxylic acids and converts only the S-isomer (or L-isomer) of 2-chloropropionic acid with inversion of configuration to produce R-lactate (or D-isomer). The sequence is that of (S)-2-haloacid dehalogenase 2 from Pseudomonas sp. (strain CBS-3).